Reading from the N-terminus, the 238-residue chain is UDP-2,3-diacylglucosamine hydrolase (238 aa).

The Mn(2+) site is built by Asp-8, His-10, Asp-41, Asn-78, and His-113. Position 78-79 (78-79) interacts with substrate; sequence NR. Substrate is bound by residues Asp-121, Ser-159, Asn-163, Lys-166, and His-194. Residues His-194 and His-196 each coordinate Mn(2+).

The protein belongs to the LpxH family. It depends on Mn(2+) as a cofactor.

Its subcellular location is the cell inner membrane. The catalysed reaction is UDP-2-N,3-O-bis[(3R)-3-hydroxytetradecanoyl]-alpha-D-glucosamine + H2O = 2-N,3-O-bis[(3R)-3-hydroxytetradecanoyl]-alpha-D-glucosaminyl 1-phosphate + UMP + 2 H(+). Its pathway is glycolipid biosynthesis; lipid IV(A) biosynthesis; lipid IV(A) from (3R)-3-hydroxytetradecanoyl-[acyl-carrier-protein] and UDP-N-acetyl-alpha-D-glucosamine: step 4/6. Its function is as follows. Hydrolyzes the pyrophosphate bond of UDP-2,3-diacylglucosamine to yield 2,3-diacylglucosamine 1-phosphate (lipid X) and UMP by catalyzing the attack of water at the alpha-P atom. Involved in the biosynthesis of lipid A, a phosphorylated glycolipid that anchors the lipopolysaccharide to the outer membrane of the cell. The sequence is that of UDP-2,3-diacylglucosamine hydrolase from Shewanella halifaxensis (strain HAW-EB4).